We begin with the raw amino-acid sequence, 130 residues long: Small ribosomal subunit protein uS11c (130 aa).

The protein belongs to the universal ribosomal protein uS11 family. Part of the 30S ribosomal subunit.

Its subcellular location is the plastid. It is found in the chloroplast. The polypeptide is Small ribosomal subunit protein uS11c (Oedogonium cardiacum (Filamentous green alga)).